Reading from the N-terminus, the 168-residue chain is ATP synthase subunit b (168 aa).

Residues 10–30 form a helical membrane-spanning segment; sequence LYLGDMLFYLVSFLIMAALVW. Residues 61-80 are disordered; that stretch reads EAQKLAAKRQEELKGSRQEA.

Belongs to the ATPase B chain family. As to quaternary structure, F-type ATPases have 2 components, F(1) - the catalytic core - and F(0) - the membrane proton channel. F(1) has five subunits: alpha(3), beta(3), gamma(1), delta(1), epsilon(1). F(0) has three main subunits: a(1), b(2) and c(10-14). The alpha and beta chains form an alternating ring which encloses part of the gamma chain. F(1) is attached to F(0) by a central stalk formed by the gamma and epsilon chains, while a peripheral stalk is formed by the delta and b chains.

Its subcellular location is the cell membrane. In terms of biological role, f(1)F(0) ATP synthase produces ATP from ADP in the presence of a proton or sodium gradient. F-type ATPases consist of two structural domains, F(1) containing the extramembraneous catalytic core and F(0) containing the membrane proton channel, linked together by a central stalk and a peripheral stalk. During catalysis, ATP synthesis in the catalytic domain of F(1) is coupled via a rotary mechanism of the central stalk subunits to proton translocation. Component of the F(0) channel, it forms part of the peripheral stalk, linking F(1) to F(0). The chain is ATP synthase subunit b from Limosilactobacillus fermentum (strain NBRC 3956 / LMG 18251) (Lactobacillus fermentum).